The following is a 399-amino-acid chain: 1-deoxy-D-xylulose 5-phosphate reductoisomerase (399 aa).

NADPH contacts are provided by Thr10, Gly11, Ser12, Ile13, and Asn124. Lys125 contributes to the 1-deoxy-D-xylulose 5-phosphate binding site. NADPH is bound at residue Glu126. Asp150 is a Mn(2+) binding site. 1-deoxy-D-xylulose 5-phosphate contacts are provided by Ser151, Glu152, Ser186, and His209. Residue Glu152 participates in Mn(2+) binding. An NADPH-binding site is contributed by Gly215. 1-deoxy-D-xylulose 5-phosphate contacts are provided by Ser222, Asn227, Lys228, and Glu231. Glu231 is a Mn(2+) binding site.

It belongs to the DXR family. The cofactor is Mg(2+). It depends on Mn(2+) as a cofactor.

The catalysed reaction is 2-C-methyl-D-erythritol 4-phosphate + NADP(+) = 1-deoxy-D-xylulose 5-phosphate + NADPH + H(+). Its pathway is isoprenoid biosynthesis; isopentenyl diphosphate biosynthesis via DXP pathway; isopentenyl diphosphate from 1-deoxy-D-xylulose 5-phosphate: step 1/6. Functionally, catalyzes the NADPH-dependent rearrangement and reduction of 1-deoxy-D-xylulose-5-phosphate (DXP) to 2-C-methyl-D-erythritol 4-phosphate (MEP). This Psychromonas ingrahamii (strain DSM 17664 / CCUG 51855 / 37) protein is 1-deoxy-D-xylulose 5-phosphate reductoisomerase.